Here is a 71-residue protein sequence, read N- to C-terminus: Conotoxin Bu25 (71 aa).

A signal peptide spans 1–21; the sequence is MGMRMMVTVFPLVVLATTVVS. A propeptide spanning residues 22–44 is cleaved from the precursor; that stretch reads LRSNRASDGRRGIVNKLNDLVPK. The residue at position 70 (arginine 70) is an Arginine amide.

It belongs to the conotoxin A superfamily. In terms of processing, contains 3 disulfide bonds. They are not indicated here, since framework IV presents two different connectivities (I-V, II-III, IV-VI and I-III, II-V, IV-VI). In terms of tissue distribution, expressed by the venom duct.

The protein localises to the secreted. This chain is Conotoxin Bu25, found in Conus bullatus (Bubble cone).